Here is a 306-residue protein sequence, read N- to C-terminus: tRNA pseudouridine synthase B (306 aa).

Aspartate 48 serves as the catalytic Nucleophile.

Belongs to the pseudouridine synthase TruB family. Type 1 subfamily.

The enzyme catalyses uridine(55) in tRNA = pseudouridine(55) in tRNA. Responsible for synthesis of pseudouridine from uracil-55 in the psi GC loop of transfer RNAs. This is tRNA pseudouridine synthase B from Ectopseudomonas mendocina (strain ymp) (Pseudomonas mendocina).